A 343-amino-acid polypeptide reads, in one-letter code: Beta-ketoacyl-[acyl-carrier-protein] synthase III 1 (343 aa).

Active-site residues include Cys122 and His268. The tract at residues 269 to 273 (QANVR) is ACP-binding. Residue Asn299 is part of the active site.

The protein belongs to the thiolase-like superfamily. FabH family. In terms of assembly, homodimer.

The protein localises to the cytoplasm. It carries out the reaction malonyl-[ACP] + acetyl-CoA + H(+) = 3-oxobutanoyl-[ACP] + CO2 + CoA. The protein operates within lipid metabolism; fatty acid biosynthesis. Functionally, essential enzyme that catalyzes the condensation reaction of fatty acid synthesis by the addition to an acyl acceptor of two carbons from malonyl-ACP. Catalyzes the first condensation reaction which initiates fatty acid synthesis and may therefore play a role in governing the total rate of fatty acid production. Possesses both acetoacetyl-ACP synthase and acetyl transacylase activities. Its substrate specificity determines the biosynthesis of branched-chain of fatty acids. This Streptomyces coelicolor (strain ATCC BAA-471 / A3(2) / M145) protein is Beta-ketoacyl-[acyl-carrier-protein] synthase III 1.